Reading from the N-terminus, the 172-residue chain is RNA pyrophosphohydrolase (172 aa).

Residues 6-149 (GFRANVGIII…KRDVYRKVMK (144 aa)) form the Nudix hydrolase domain. Positions 38–59 (GGLDDGESAEEAMYRELYEEVG) match the Nudix box motif.

This sequence belongs to the Nudix hydrolase family. RppH subfamily. It depends on a divalent metal cation as a cofactor.

Functionally, accelerates the degradation of transcripts by removing pyrophosphate from the 5'-end of triphosphorylated RNA, leading to a more labile monophosphorylated state that can stimulate subsequent ribonuclease cleavage. This is RNA pyrophosphohydrolase from Shewanella denitrificans (strain OS217 / ATCC BAA-1090 / DSM 15013).